The primary structure comprises 313 residues: 4-diphosphocytidyl-2-C-methyl-D-erythritol kinase (313 aa).

The active site involves Lys27. 110–120 is a binding site for ATP; it reads PIGGGVGGGSS. Residue Asp152 is part of the active site.

It belongs to the GHMP kinase family. IspE subfamily.

It carries out the reaction 4-CDP-2-C-methyl-D-erythritol + ATP = 4-CDP-2-C-methyl-D-erythritol 2-phosphate + ADP + H(+). It participates in isoprenoid biosynthesis; isopentenyl diphosphate biosynthesis via DXP pathway; isopentenyl diphosphate from 1-deoxy-D-xylulose 5-phosphate: step 3/6. In terms of biological role, catalyzes the phosphorylation of the position 2 hydroxy group of 4-diphosphocytidyl-2C-methyl-D-erythritol. In Histophilus somni (strain 2336) (Haemophilus somnus), this protein is 4-diphosphocytidyl-2-C-methyl-D-erythritol kinase.